We begin with the raw amino-acid sequence, 179 residues long: Adenine phosphoribosyltransferase (179 aa).

It belongs to the purine/pyrimidine phosphoribosyltransferase family. Homodimer.

The protein resides in the cytoplasm. The catalysed reaction is AMP + diphosphate = 5-phospho-alpha-D-ribose 1-diphosphate + adenine. Its pathway is purine metabolism; AMP biosynthesis via salvage pathway; AMP from adenine: step 1/1. Functionally, catalyzes a salvage reaction resulting in the formation of AMP, that is energically less costly than de novo synthesis. The chain is Adenine phosphoribosyltransferase from Jannaschia sp. (strain CCS1).